Consider the following 493-residue polypeptide: Probable cytochrome P450 CYP36A1 (493 aa).

3 helical membrane-spanning segments follow: residues 1–21 (MLFA…CRFA), 60–80 (GGIF…YDML), and 290–310 (QLIV…IIVL). Heme is bound at residue Cys-440.

This sequence belongs to the cytochrome P450 family. Heme is required as a cofactor.

The protein resides in the membrane. In terms of biological role, cytochromes P450 are a group of heme-thiolate monooxygenases. They oxidize a variety of structurally unrelated compounds, including steroids, fatty acids, and xenobiotics. In Caenorhabditis elegans, this protein is Probable cytochrome P450 CYP36A1 (cyp-36A1).